The chain runs to 535 residues: MKFVVITGGVVSGIGKGITTASIGRILRARELEVTAVKIDPYINVDAGTMNPFQHGEVFVTEDGVETDLDLGHYERFMDVTLSGAHNITTGKIYQRVIEKERRGDYLGETVQVIPHITDEIKSWIREVGKASGADVVLVEIGGTVGDIEGMPFYEAVRQLQLEEGRENVMFVHLTYVPYLEHVHELKTKPTQHSVKELRSLGIQPDAIVCRCERPLDDGVKRKIALHTNVPREAVIDAHDVDLVYKVPLLLERQGFGDYICERLGLDADEPDYSDWLDFVTRIEEADDEIRIAVVGKYVDLPDAYISIREALVHAGAHVGVGVDVAWVDSEALEAGDSEAWEEVKDADGVLVPGGFGKRGVEGKIEAVRYARENDVPFLGICLGFQLVVVEYARSVLGLEDAHSTEFNPDTDHPVVDLLPEQRGVKRKGGTMRLGAEPVVLEEGSLLRRLYDDREIVLERHRHRYEVNPSYVRELEDHGLRFSGHSPDGRMEALELPDHPYFVGTQFHPEFKSRPGDPSPPFVGLIKAAAGQGPD.

The tract at residues 1-266 (MKFVVITGGV…GDYICERLGL (266 aa)) is amidoligase domain. A CTP-binding site is contributed by S12. S12 provides a ligand contact to UTP. Residues 13 to 18 (GIGKGI) and D70 each bind ATP. Mg(2+) is bound by residues D70 and E140. Residues 147–149 (DIE), 187–192 (KTKPTQ), and K223 contribute to the CTP site. UTP-binding positions include 187–192 (KTKPTQ) and K223. Residues 291 to 535 (RIAVVGKYVD…IKAAAGQGPD (245 aa)) enclose the Glutamine amidotransferase type-1 domain. G355 serves as a coordination point for L-glutamine. C382 acts as the Nucleophile; for glutamine hydrolysis in catalysis. Residues 383 to 386 (LGFQ), E406, and R464 contribute to the L-glutamine site. Active-site residues include H508 and E510.

The protein belongs to the CTP synthase family. As to quaternary structure, homotetramer.

The catalysed reaction is UTP + L-glutamine + ATP + H2O = CTP + L-glutamate + ADP + phosphate + 2 H(+). It carries out the reaction L-glutamine + H2O = L-glutamate + NH4(+). It catalyses the reaction UTP + NH4(+) + ATP = CTP + ADP + phosphate + 2 H(+). It functions in the pathway pyrimidine metabolism; CTP biosynthesis via de novo pathway; CTP from UDP: step 2/2. Its activity is regulated as follows. Allosterically activated by GTP, when glutamine is the substrate; GTP has no effect on the reaction when ammonia is the substrate. The allosteric effector GTP functions by stabilizing the protein conformation that binds the tetrahedral intermediate(s) formed during glutamine hydrolysis. Inhibited by the product CTP, via allosteric rather than competitive inhibition. Catalyzes the ATP-dependent amination of UTP to CTP with either L-glutamine or ammonia as the source of nitrogen. Regulates intracellular CTP levels through interactions with the four ribonucleotide triphosphates. The sequence is that of CTP synthase from Methanopyrus kandleri (strain AV19 / DSM 6324 / JCM 9639 / NBRC 100938).